Reading from the N-terminus, the 238-residue chain is Neuromodulin (238 aa).

Residues 1–238 are disordered; it reads MLCCMRRTKQ…EEPEADQEHA (238 aa). 2 S-palmitoyl cysteine lipidation sites follow: Cys-3 and Cys-4. Basic and acidic residues predominate over residues 9–32; it reads KQVEKNDEDQKIEQDGIKPEDKAH. Positions 31 to 60 constitute an IQ domain; the sequence is AHKAATKIQASFRGHITRKKLKGEKKDDAQ. Ser-41 bears the Phosphoserine; by PHK and PKC mark. Positions 54 to 83 are enriched in basic and acidic residues; the sequence is EKKDDAQAAEAEANKKDEAPVADGVEKKGE. The segment covering 84 to 95 has biased composition (low complexity); it reads GTTATEAAPATG. The span at 97–116 shows a compositional bias: basic and acidic residues; that stretch reads KPDEPGKAGETPSEEKKGEG. Low complexity predominate over residues 119 to 130; sequence ATEQAAPQAPAS. A compositionally biased stretch (polar residues) spans 139–154; it reads ETESATKASTDNSPSS. A phosphoserine mark is found at Ser-151, Ser-153, and Ser-154. The segment covering 155-167 has biased composition (basic and acidic residues); sequence KAEDAPAKEEPKQ. Residues 168-199 are compositionally biased toward low complexity; the sequence is ADVPAAVTAAAATTPAAEDAAAKATAQPPTET. Thr-181 carries the phosphothreonine modification. Phosphoserine; by CK2 occurs at positions 202 and 203. A compositionally biased stretch (basic and acidic residues) spans 213 to 225; it reads DETKPKESARQDE. The segment covering 226–238 has biased composition (acidic residues); that stretch reads GKEEEPEADQEHA.

This sequence belongs to the neuromodulin family. As to quaternary structure, identified in a complex containing FGFR4, NCAM1, CDH2, PLCG1, FRS2, SRC, SHC1, GAP43 and CTTN. Interacts (via IQ domain) with calmodulin. Binds calmodulin with a greater affinity in the absence of Ca(2+) than in its presence. Phosphorylated. Phosphorylation of this protein by a protein kinase C is specifically correlated with certain forms of synaptic plasticity. Post-translationally, palmitoylated by ZDHHC3. Palmitoylation is regulated by ARF6 and is essential for plasma membrane association and axonal and dendritic filopodia induction. Deacylated by LYPLA2.

The protein resides in the cell membrane. The protein localises to the cell projection. Its subcellular location is the growth cone membrane. It is found in the synapse. It localises to the filopodium membrane. The protein resides in the perikaryon. The protein localises to the dendrite. Its subcellular location is the axon. It is found in the cytoplasm. Its function is as follows. This protein is associated with nerve growth. It is a major component of the motile 'growth cones' that form the tips of elongating axons. Plays a role in axonal and dendritic filopodia induction. This chain is Neuromodulin (GAP43), found in Macaca fascicularis (Crab-eating macaque).